The following is a 331-amino-acid chain: Biotin synthase (331 aa).

In terms of domain architecture, Radical SAM core spans 52 to 281 (FFQNKVKLNM…TKEIRVSGGR (230 aa)). Cysteine 70, cysteine 74, and cysteine 77 together coordinate [4Fe-4S] cluster. [2Fe-2S] cluster-binding residues include cysteine 114, cysteine 146, cysteine 206, and arginine 276.

It belongs to the radical SAM superfamily. Biotin synthase family. In terms of assembly, homodimer. [4Fe-4S] cluster serves as cofactor. [2Fe-2S] cluster is required as a cofactor.

The catalysed reaction is (4R,5S)-dethiobiotin + (sulfur carrier)-SH + 2 reduced [2Fe-2S]-[ferredoxin] + 2 S-adenosyl-L-methionine = (sulfur carrier)-H + biotin + 2 5'-deoxyadenosine + 2 L-methionine + 2 oxidized [2Fe-2S]-[ferredoxin]. It functions in the pathway cofactor biosynthesis; biotin biosynthesis; biotin from 7,8-diaminononanoate: step 2/2. Its function is as follows. Catalyzes the conversion of dethiobiotin (DTB) to biotin by the insertion of a sulfur atom into dethiobiotin via a radical-based mechanism. The polypeptide is Biotin synthase (Bacillus pumilus (strain SAFR-032)).